We begin with the raw amino-acid sequence, 284 residues long: MEMO1 family protein YG5714_2180 (284 aa).

This sequence belongs to the MEMO1 family.

This chain is MEMO1 family protein YG5714_2180, found in Saccharolobus islandicus (strain Y.G.57.14 / Yellowstone #1) (Sulfolobus islandicus).